Reading from the N-terminus, the 1149-residue chain is ATP-dependent helicase/deoxyribonuclease subunit B (1149 aa).

8-15 (GRAGTGKT) contacts ATP. Positions 784, 1102, 1105, and 1111 each coordinate [4Fe-4S] cluster.

This sequence belongs to the helicase family. AddB/RexB type 1 subfamily. Heterodimer of AddA and AddB. The cofactor is Mg(2+). Requires [4Fe-4S] cluster as cofactor.

In terms of biological role, the heterodimer acts as both an ATP-dependent DNA helicase and an ATP-dependent, dual-direction single-stranded exonuclease. Recognizes the chi site generating a DNA molecule suitable for the initiation of homologous recombination. The AddB subunit has 5' -&gt; 3' nuclease activity but not helicase activity. The sequence is that of ATP-dependent helicase/deoxyribonuclease subunit B from Thermoanaerobacter pseudethanolicus (strain ATCC 33223 / 39E) (Clostridium thermohydrosulfuricum).